Reading from the N-terminus, the 991-residue chain is Integrator complex subunit 8 (991 aa).

Over residues 1–10 (MSAEAADREA) the composition is skewed to basic and acidic residues. Positions 1-22 (MSAEAADREAATSSRPCTPPQT) are disordered. Positions 11-22 (ATSSRPCTPPQT) are enriched in polar residues. Positions 24-29 (WFEFLL) match the WFEF motif motif. TPR repeat units lie at residues 250–288 (CQGC…VSKI), 319–355 (SQPA…SLPD), 569–602 (VYIL…VTEF), and 829–862 (HSWL…CSDF).

It belongs to the Integrator subunit 8 family. As to quaternary structure, component of the Integrator complex, composed of core subunits INTS1, INTS2, INTS3, INTS4, INTS5, INTS6, INTS7, INTS8, INTS9/RC74, INTS10, INTS11/CPSF3L, INTS12, INTS13, INTS14 and INTS15. The core complex associates with protein phosphatase 2A subunits PPP2CA and PPP2R1A, to form the Integrator-PP2A (INTAC) complex.

The protein localises to the nucleus. It localises to the chromosome. In terms of biological role, component of the integrator complex, a multiprotein complex that terminates RNA polymerase II (Pol II) transcription in the promoter-proximal region of genes. The integrator complex provides a quality checkpoint during transcription elongation by driving premature transcription termination of transcripts that are unfavorably configured for transcriptional elongation: the complex terminates transcription by (1) catalyzing dephosphorylation of the C-terminal domain (CTD) of Pol II subunit POLR2A/RPB1 and SUPT5H/SPT5, (2) degrading the exiting nascent RNA transcript via endonuclease activity and (3) promoting the release of Pol II from bound DNA. The integrator complex is also involved in terminating the synthesis of non-coding Pol II transcripts, such as enhancer RNAs (eRNAs), small nuclear RNAs (snRNAs), telomerase RNAs and long non-coding RNAs (lncRNAs). Within the integrator complex, INTS8 is required for the recruitment of protein phosphatase 2A (PP2A) to transcription pause-release checkpoint. This Xenopus laevis (African clawed frog) protein is Integrator complex subunit 8 (ints8).